A 253-amino-acid chain; its full sequence is 5'-nucleotidase SurE (253 aa).

Residues Asp-8, Asp-9, Ser-39, and Asn-95 each contribute to the a divalent metal cation site.

This sequence belongs to the SurE nucleotidase family. Requires a divalent metal cation as cofactor.

Its subcellular location is the cytoplasm. It carries out the reaction a ribonucleoside 5'-phosphate + H2O = a ribonucleoside + phosphate. Functionally, nucleotidase that shows phosphatase activity on nucleoside 5'-monophosphates. This Chloroflexus aggregans (strain MD-66 / DSM 9485) protein is 5'-nucleotidase SurE.